The chain runs to 328 residues: E3 ubiquitin-protein ligase RING1-like (328 aa).

N-acetylserine is present on S2. Residues 216-257 (CAVCMDEFEDGSDVKQMPCKHVFHQDCLLPWLELHNSCPVCR) form an RING-type; atypical zinc finger. The segment at 264-328 (DPDYENRSQG…NLETRGEDLD (65 aa)) is disordered. Residues 306 to 319 (SGSGSGAPGTGGGN) show a composition bias toward gly residues.

Post-translationally, auto-ubiquitinated as part of the enzymatic reaction. As to expression, expressed in leaves, roots, trichomes, stipules, and also in anthers and stigma of flowers.

It carries out the reaction S-ubiquitinyl-[E2 ubiquitin-conjugating enzyme]-L-cysteine + [acceptor protein]-L-lysine = [E2 ubiquitin-conjugating enzyme]-L-cysteine + N(6)-ubiquitinyl-[acceptor protein]-L-lysine.. It participates in protein modification; protein ubiquitination. Its function is as follows. E3 ubiquitin-protein ligase which accepts ubiquitin from an E2 ubiquitin-conjugating enzyme in the form of a thioester and then directly transfers the ubiquitin to targeted substrates. Promotes polyubiquitination of target proteins. This Arabidopsis thaliana (Mouse-ear cress) protein is E3 ubiquitin-protein ligase RING1-like.